Here is a 339-residue protein sequence, read N- to C-terminus: Phenylalanine--tRNA ligase alpha subunit (339 aa).

Mg(2+) is bound at residue Glu253.

Belongs to the class-II aminoacyl-tRNA synthetase family. Phe-tRNA synthetase alpha subunit type 1 subfamily. In terms of assembly, tetramer of two alpha and two beta subunits. Requires Mg(2+) as cofactor.

The protein resides in the cytoplasm. The catalysed reaction is tRNA(Phe) + L-phenylalanine + ATP = L-phenylalanyl-tRNA(Phe) + AMP + diphosphate + H(+). This chain is Phenylalanine--tRNA ligase alpha subunit, found in Geobacter sulfurreducens (strain ATCC 51573 / DSM 12127 / PCA).